We begin with the raw amino-acid sequence, 495 residues long: Serine/threonine-protein phosphatase 2A regulatory subunit sur-6 (495 aa).

Residues 1-27 (MVMEVDEPAVAATTSQNQPQEHANDFD) are disordered. Residues 12–21 (ATTSQNQPQE) are compositionally biased toward polar residues. 6 WD repeats span residues 64–103 (TEADVISCVEFSHDGEYLATGDKGGRVVIFQRDQSGKYVK), 130–171 (EIDE…RKIG), 215–253 (AHTYHVNSISVNSDQETFLSADDLRVNLWNLEITNESFN), 264–304 (ELTE…LCDA), 323–361 (EIIASVSDVKFSHNGRYLLTRDYLTVKVWDLNMESQPVE), and 378–419 (ENDS…DAKT). The disordered stretch occupies residues 439-459 (SAKRKRNNLSSSGETTEEDLS). A WD 7 repeat occupies 464–495 (QFDRKILHTAWHPKDNIIALAATNNLYIFSDV).

This sequence belongs to the phosphatase 2A regulatory subunit B family. Part of a complex consisting of a common heterodimeric core enzyme, composed of catalytic subunit let-92 and constant regulatory subunit paa-1, that associates with a variety of regulatory subunits which confer distinct properties to the holoenzyme. Interacts with let-92.

It is found in the cytoplasm. In terms of biological role, probable regulatory subunit of serine/threonine phosphatase let-92. Together with let-92 and constant regulatory subunit paa-1, positively regulates centriole duplication during early embryonic cell divisions by preventing the degradation of sas-5 and kinase zyg-1. In addition, during vulva development, may play a role with phosphatase let-92 and regulatory subunit paa-1 in the induction of vulva cell precursors by positively regulating let-60/Ras-MAP kinase signaling, probably by promoting lin-45 activation. In intestinal epithelial cells, may play a role in the late secretory pathway probably by regulating the exocyst, a protein complex involved in targeting secretory vesicles to the plasma membrane. The polypeptide is Serine/threonine-protein phosphatase 2A regulatory subunit sur-6 (Caenorhabditis elegans).